A 239-amino-acid chain; its full sequence is Alpha-acetolactate decarboxylase (239 aa).

The protein belongs to the alpha-acetolactate decarboxylase family.

The catalysed reaction is (2S)-2-acetolactate + H(+) = (R)-acetoin + CO2. It participates in polyol metabolism; (R,R)-butane-2,3-diol biosynthesis; (R,R)-butane-2,3-diol from pyruvate: step 2/3. The enzyme is active only in the presence of branched-chain amino acids. Valine results in much higher activation than leucine or isoleucine. Converts acetolactate into acetoin. Regulates leucine and valine biosynthesis by diverting the flux of alpha-acetolactate towards acetoin when the branched-chain amino acids are present in high concentration. The sequence is that of Alpha-acetolactate decarboxylase (aldC) from Streptococcus thermophilus.